The following is a 404-amino-acid chain: L-cysteine:1D-myo-inositol 2-amino-2-deoxy-alpha-D-glucopyranoside ligase (404 aa).

A Zn(2+)-binding site is contributed by C47. L-cysteinyl-5'-AMP-binding positions include 47 to 50 (CGIT), T62, and 85 to 87 (NIT). The short motif at 49–59 (ITPYDSTHLGH) is the 'HIGH' region element. The 'ERGGDP' region signature appears at 188–193 (ERGGDP). Position 228 (W228) interacts with L-cysteinyl-5'-AMP. C232 contacts Zn(2+). Position 250–252 (250–252 (GSD)) interacts with L-cysteinyl-5'-AMP. H257 provides a ligand contact to Zn(2+). I284 is a binding site for L-cysteinyl-5'-AMP. A 'KMSKS' region motif is present at residues 290–294 (KMSKS).

It belongs to the class-I aminoacyl-tRNA synthetase family. MshC subfamily. Monomer. It depends on Zn(2+) as a cofactor.

The enzyme catalyses 1D-myo-inositol 2-amino-2-deoxy-alpha-D-glucopyranoside + L-cysteine + ATP = 1D-myo-inositol 2-(L-cysteinylamino)-2-deoxy-alpha-D-glucopyranoside + AMP + diphosphate + H(+). In terms of biological role, catalyzes the ATP-dependent condensation of GlcN-Ins and L-cysteine to form L-Cys-GlcN-Ins. The sequence is that of L-cysteine:1D-myo-inositol 2-amino-2-deoxy-alpha-D-glucopyranoside ligase from Corynebacterium striatum.